Here is a 163-residue protein sequence, read N- to C-terminus: Ribosome maturation factor RimM (163 aa).

The region spanning 90-161 is the PRC barrel domain; sequence EGRHYWGDLE…VVVDPPEGLL (72 aa).

It belongs to the RimM family. As to quaternary structure, binds ribosomal protein uS19.

It is found in the cytoplasm. In terms of biological role, an accessory protein needed during the final step in the assembly of 30S ribosomal subunit, possibly for assembly of the head region. Essential for efficient processing of 16S rRNA. May be needed both before and after RbfA during the maturation of 16S rRNA. It has affinity for free ribosomal 30S subunits but not for 70S ribosomes. The protein is Ribosome maturation factor RimM of Anaeromyxobacter dehalogenans (strain 2CP-C).